Here is a 326-residue protein sequence, read N- to C-terminus: NAD-dependent protein deacylase SIR5 (326 aa).

Residues 1-26 constitute a mitochondrion transit peptide; it reads MRLLRPTPRLSSIFSSKTATSNLRFF. The Deacetylase sirtuin-type domain maps to 28–324; it reads AMAPHNDVGA…IGKLETDKKE (297 aa). 53 to 72 provides a ligand contact to NAD(+); it reads GAGLSASSGLPTFRGAGGLW. The substrate site is built by tyrosine 97 and arginine 100. The Proton acceptor role is filled by histidine 151. Residues cysteine 159, cysteine 162, cysteine 211, and cysteine 214 each coordinate Zn(2+).

Belongs to the sirtuin family. Class I subfamily. In terms of assembly, interacts with LAT1; the interaction is direct. Zn(2+) is required as a cofactor.

The protein localises to the mitochondrion. The protein resides in the cytoplasm. It is found in the cytosol. Its subcellular location is the nucleus. It localises to the chromosome. It catalyses the reaction N(6)-acetyl-L-lysyl-[protein] + NAD(+) + H2O = 2''-O-acetyl-ADP-D-ribose + nicotinamide + L-lysyl-[protein]. The catalysed reaction is N(6)-(2E)-butenoyl-L-lysyl-[protein] + H2O = (2E)-2-butenoate + L-lysyl-[protein]. In terms of biological role, NAD-dependent protein-lysine deacylase that decrotonylates the PDC (pyruvate dehydrogenase complex) subunit LAT1 at 'Lys-148' to inhibit PDC activity and consequently ATP production. Also decrotonylates histone H3 crotonylated at 'Lys-18' (H3K18cr), to repress the expression of genes involved in aerobic respiration. May also act as a NAD-dependent deacetylase. Does not mediate desuccinylation, demalonylation, or deglutarylation of LAT1. The protein is NAD-dependent protein deacylase SIR5 of Fusarium oxysporum f. sp. lycopersici (strain 4287 / CBS 123668 / FGSC 9935 / NRRL 34936) (Fusarium vascular wilt of tomato).